A 590-amino-acid polypeptide reads, in one-letter code: O-fucosyltransferase 2 (590 aa).

Basic and acidic residues predominate over residues methionine 1–aspartate 16. Positions methionine 1–histidine 26 are disordered. Residues threonine 67–serine 87 traverse the membrane as a helical; Signal-anchor for type II membrane protein segment. Asparagine 125 carries an N-linked (GlcNAc...) asparagine glycan. Histidine 365–arginine 367 is a substrate binding site. N-linked (GlcNAc...) asparagine glycosylation is found at asparagine 485 and asparagine 546.

This sequence belongs to the glycosyltransferase GT106 family.

The protein localises to the membrane. The protein operates within glycan metabolism. The sequence is that of O-fucosyltransferase 2 from Arabidopsis thaliana (Mouse-ear cress).